The following is a 324-amino-acid chain: Beta-ketoacyl-[acyl-carrier-protein] synthase III (324 aa).

Residues Cys-113 and His-251 contribute to the active site. The interval 252-256 (QANKR) is ACP-binding. The active site involves Asn-281.

Belongs to the thiolase-like superfamily. FabH family. In terms of assembly, homodimer.

It localises to the cytoplasm. It catalyses the reaction malonyl-[ACP] + acetyl-CoA + H(+) = 3-oxobutanoyl-[ACP] + CO2 + CoA. It participates in lipid metabolism; fatty acid biosynthesis. Functionally, catalyzes the condensation reaction of fatty acid synthesis by the addition to an acyl acceptor of two carbons from malonyl-ACP. Catalyzes the first condensation reaction which initiates fatty acid synthesis and may therefore play a role in governing the total rate of fatty acid production. Possesses both acetoacetyl-ACP synthase and acetyl transacylase activities. Its substrate specificity determines the biosynthesis of branched-chain and/or straight-chain of fatty acids. This is Beta-ketoacyl-[acyl-carrier-protein] synthase III from Bartonella henselae (strain ATCC 49882 / DSM 28221 / CCUG 30454 / Houston 1) (Rochalimaea henselae).